The following is a 193-amino-acid chain: Non-specific lipid transfer protein GPI-anchored 1 (193 aa).

Positions 1-22 (MKGLHLHLVLVTMTIVASIAAA) are cleaved as a signal peptide. 4 disulfide bridges follow: cysteine 35-cysteine 76, cysteine 45-cysteine 60, cysteine 61-cysteine 106, and cysteine 74-cysteine 116. Asparagine 110 and asparagine 135 each carry an N-linked (GlcNAc...) asparagine glycan. The interval 138 to 161 (TTPVAPAGKSPATPATSTDKGGSA) is disordered. A lipid anchor (GPI-anchor amidated aspartate) is attached at aspartate 165. Positions 166–193 (GHAVVALAVALMAVSFVLTLPRHVTLGM) are cleaved as a propeptide — removed in mature form.

It belongs to the plant LTP family. O-glycosylated on hydroxyprolines; noncontiguous hydroxylproline residues are glycosylated with arabinogalactan. In terms of tissue distribution, up-regulated in the epidermis of stems and leaves. Expressed in the epidermis, stem cortex, vascular bundles and mesophyll cells in root tips, cotyledons, seedlings, leaves, caulines, flowers, siliques, pollen, and early-developing seeds.

The protein resides in the cell membrane. Its subcellular location is the secreted. It localises to the cell wall. It is found in the endoplasmic reticulum. The protein localises to the golgi apparatus. Lipid transfer protein that, together with LTPG2, binds to lipids and functions as a component of the cuticular lipid export machinery that performs extensive export of intracellular lipids (e.g. C29 alkane) from epidermal cells to the surface to build the cuticular wax layer and silique walls. Involved in the establishment of resistance to the necrotrophic fungal pathogen Alternaria brassicicola. Contributes to pre-invasive defense against some non-host powdery mildew pathogens by preventing the penetration of the epidermal cell wall by the fungal agents (e.g. Blumeria graminis f. sp. hordei (Bgh)). Maybe involved in seed and ovule maturation and development, probably by regulating the fatty acids homeostasis during suberin and sporopollenin biosynthesis or deposition. In Arabidopsis thaliana (Mouse-ear cress), this protein is Non-specific lipid transfer protein GPI-anchored 1.